Reading from the N-terminus, the 311-residue chain is MGRRNNTNVPDFILTGLSDSEEVQMALFILFLLIYLITMLGNVGMILIIRLDLQLHTPMYFFLTHLSFIDLSYSTVITPKTLANLLTSNYISFMGCFAQMFFFVFLGAAECFLLSSMAYDRYVAICSPLRYPVIMSKRLCCALVTGPYVISFINSFVNVVWMSRLHFCDSNVVRHFFCDTSPILALSCMDTYDIEIMIHILAGSTLMVSLITISASYVSILSTILKINSTSGKQKALSTCASHLLGVTIFYGTMIFTYLKPRKSYSLGRDQVASVFYTIVIPMLNPLIYSLRNKEVKNALIRVMQRRQDSR.

Topologically, residues 1–25 (MGRRNNTNVPDFILTGLSDSEEVQM) are extracellular. N-linked (GlcNAc...) asparagine glycosylation occurs at N5. A helical transmembrane segment spans residues 26 to 46 (ALFILFLLIYLITMLGNVGMI). Residues 47–54 (LIIRLDLQ) lie on the Cytoplasmic side of the membrane. A helical transmembrane segment spans residues 55-75 (LHTPMYFFLTHLSFIDLSYST). Residues 76–98 (VITPKTLANLLTSNYISFMGCFA) lie on the Extracellular side of the membrane. C96 and C188 are oxidised to a cystine. The chain crosses the membrane as a helical span at residues 99 to 119 (QMFFFVFLGAAECFLLSSMAY). Topologically, residues 120–138 (DRYVAICSPLRYPVIMSKR) are cytoplasmic. The helical transmembrane segment at 139–159 (LCCALVTGPYVISFINSFVNV) threads the bilayer. Over 160–196 (VWMSRLHFCDSNVVRHFFCDTSPILALSCMDTYDIEI) the chain is Extracellular. A helical transmembrane segment spans residues 197–216 (MIHILAGSTLMVSLITISAS). The Cytoplasmic segment spans residues 217-236 (YVSILSTILKINSTSGKQKA). A helical transmembrane segment spans residues 237–257 (LSTCASHLLGVTIFYGTMIFT). The Extracellular segment spans residues 258–270 (YLKPRKSYSLGRD). A helical transmembrane segment spans residues 271–291 (QVASVFYTIVIPMLNPLIYSL). At 292–311 (RNKEVKNALIRVMQRRQDSR) the chain is on the cytoplasmic side.

It belongs to the G-protein coupled receptor 1 family.

The protein resides in the cell membrane. Functionally, odorant receptor. This Homo sapiens (Human) protein is Olfactory receptor 8H1 (OR8H1).